Consider the following 629-residue polypeptide: tRNA uridine 5-carboxymethylaminomethyl modification enzyme MnmG (629 aa).

Residues 13–18, valine 125, and serine 180 contribute to the FAD site; that span reads GGGHAG. Residue 273–287 coordinates NAD(+); sequence GPRYCPSIEDKVMRF. Glutamine 370 provides a ligand contact to FAD.

The protein belongs to the MnmG family. In terms of assembly, homodimer. Heterotetramer of two MnmE and two MnmG subunits. The cofactor is FAD.

The protein resides in the cytoplasm. Functionally, NAD-binding protein involved in the addition of a carboxymethylaminomethyl (cmnm) group at the wobble position (U34) of certain tRNAs, forming tRNA-cmnm(5)s(2)U34. This chain is tRNA uridine 5-carboxymethylaminomethyl modification enzyme MnmG, found in Escherichia coli (strain SMS-3-5 / SECEC).